The sequence spans 487 residues: Calcium-dependent mitochondrial ATP-magnesium/phosphate carrier protein 2 (487 aa).

Over 1 to 211 the chain is Mitochondrial intermembrane; sequence MEATKSSKQN…ISKHIKRSNY (211 aa). EF-hand domains lie at 36–71, 72–107, 108–138, and 139–174; these read ERDLRIRSLFSFFDSENVGYLDCAQIEKGLCALQIP, SGYKYAKELFRVCDANRDGRVDYHEFRRYMDDKELE, LYRIFQAIDVEHNGCISPEGLWDSLVKAGIE, and IKDEELARFVEHVDKDNDGIIMFEEWRDFLLLYPHE. The Ca(2+) site is built by aspartate 85, asparagine 87, aspartate 89, arginine 91, and glutamate 96. Positions 152, 154, 156, and 163 each coordinate Ca(2+). Solcar repeat units follow at residues 206–289, 301–389, and 400–483; these read IKRS…FKNA, IGTT…LKDL, and PGPL…MKKS. The helical transmembrane segment at 212–229 threads the bilayer; it reads FIAGGIAGAASRTATAPL. Residues 230–263 lie on the Mitochondrial matrix side of the membrane; the sequence is DRLKVLLQIQKTDARIREAIKLIWKQGGVRGFFR. A helical membrane pass occupies residues 264 to 283; it reads GNGLNIVKVAPESAIKFYAY. Residues 284 to 310 are Mitochondrial intermembrane-facing; it reads ELFKNAIGENMGEDKADIGTTVRLFAG. The chain crosses the membrane as a helical span at residues 311-324; the sequence is GMAGAVAQASIYPL. The Mitochondrial matrix segment spans residues 325–363; it reads DLVKTRLQTYTSQAGVAVPRLGTLTKDILVHEGPRAFYK. A helical membrane pass occupies residues 364 to 383; the sequence is GLFPSLLGIIPYAGIDLAAY. The Mitochondrial intermembrane portion of the chain corresponds to 384-405; that stretch reads ETLKDLSRTYILQDAEPGPLVQ. The helical transmembrane segment at 406 to 423 threads the bilayer; that stretch reads LGCGTISGALGATCVYPL. Over 424–457 the chain is Mitochondrial matrix; that stretch reads QVVRTRMQAERARTSMSGVFRRTISEEGYRALYK. A helical transmembrane segment spans residues 458 to 477; that stretch reads GLLPNLLKVVPAASITYMVY. The Mitochondrial intermembrane segment spans residues 478 to 487; that stretch reads EAMKKSLELD.

This sequence belongs to the mitochondrial carrier (TC 2.A.29) family. Expressed in flowers, leaves, stems, roots and seedlings, mostly in aerial parts.

It is found in the mitochondrion inner membrane. Counter-exchange transport activity is saturable and inhibited by pyridoxal-5'-phosphate, EDTA and EGTA. Activated by calcium Ca(2+) and manganese Mn(2+) ions, and slightly by iron Fe(2+) and zinc Zn(2+) ions. Repressed by copper ions Cu(2+) and slightly by magnesium Mg(2+) ions. Magnesium Mg(2+) ions promotes slightly ATP uptake, ATP-Mg(2+) being exchanged with ATP(4-). Functionally, calcium-dependent mitochondrial carrier protein that catalyzes the import of ATP co-transported with metal divalent cations across the mitochondrial inner membrane in exchange for phosphate (Pi). Can transport phosphate, AMP, ADP, ATP, adenosine 5'-phosphosulfate, sulfate and thiosulfate, and, to a lesser extent, other nucleotides. Binds calcium ions Ca(2+). Also mediates calcium uptake. In Arabidopsis thaliana (Mouse-ear cress), this protein is Calcium-dependent mitochondrial ATP-magnesium/phosphate carrier protein 2.